The chain runs to 199 residues: MNQSHFFAHLSRLKLISRWPLMRNVRTENVSEHSLQVAFVAHALAVIKNRKFEGNLNTERIALLAMYHDASEVLTGDMPTPIKYYNAQIAHEYKKIEKIAQQKLIEMLPEELQQDYRMLLDDSYTSEEERAIVKQADALCAYLKCLEELSAGNAEFTLAKARLEKTLQLRHSSEMDYFMTVFVPSFSLSLDEISQDSPL.

Substrate is bound by residues 18 to 19 (RW) and His33. The region spanning 30–142 (VSEHSLQVAF…VKQADALCAY (113 aa)) is the HD domain. Residues His33, His68, and Asp69 each contribute to the a divalent metal cation site. Residues Asp69, 77 to 80 (DMPT), and Asp137 each bind substrate. Asp137 serves as a coordination point for a divalent metal cation.

This sequence belongs to the 5DNU family. Homodimer. The cofactor is a divalent metal cation.

Its subcellular location is the cytoplasm. The enzyme catalyses a 2'-deoxyribonucleoside 5'-phosphate + H2O = a 2'-deoxyribonucleoside + phosphate. Its function is as follows. Catalyzes the strictly specific dephosphorylation of 2'-deoxyribonucleoside 5'-monophosphates. This Pectobacterium atrosepticum (strain SCRI 1043 / ATCC BAA-672) (Erwinia carotovora subsp. atroseptica) protein is 5'-deoxynucleotidase ECA3034.